The following is a 931-amino-acid chain: Dymeclin (931 aa).

3 disordered regions span residues 1 to 53 (MGVA…SSTT), 599 to 618 (SPSK…NTNN), and 839 to 931 (DANN…EKTN). Residue Gly-2 is the site of N-myristoyl glycine attachment. 2 stretches are compositionally biased toward low complexity: residues 27–49 (NNNK…NNNN) and 601–618 (SKIN…NTNN). A compositionally biased stretch (polar residues) spans 839-858 (DANNFTPKKQLSSDQLHSPP). Composition is skewed to low complexity over residues 859 to 876 (TNTT…SSNT) and 889 to 901 (QLQQ…NQEQ). A compositionally biased stretch (polar residues) spans 919-931 (TTGVELSSTEKTN).

This sequence belongs to the dymeclin family.

In Dictyostelium discoideum (Social amoeba), this protein is Dymeclin (dym).